We begin with the raw amino-acid sequence, 104 residues long: L-rhamnose mutarotase (104 aa).

Tyrosine 18 is a binding site for substrate. The active-site Proton donor is the histidine 22. Substrate contacts are provided by residues tyrosine 41 and 76-77 (WW).

It belongs to the rhamnose mutarotase family. Homodimer.

Its subcellular location is the cytoplasm. The catalysed reaction is alpha-L-rhamnose = beta-L-rhamnose. The protein operates within carbohydrate metabolism; L-rhamnose metabolism. Involved in the anomeric conversion of L-rhamnose. In Tolumonas auensis (strain DSM 9187 / NBRC 110442 / TA 4), this protein is L-rhamnose mutarotase.